Here is a 965-residue protein sequence, read N- to C-terminus: Pullulanase 1, chloroplastic (965 aa).

The N-terminal 62 residues, 1–62, are a transit peptide targeting the chloroplast; sequence MALTLTPTSS…SKTSLHCLCS (62 aa). D552 functions as the Nucleophile in the catalytic mechanism. Catalysis depends on E589, which acts as the Proton donor.

Belongs to the glycosyl hydrolase 13 family.

Its subcellular location is the plastid. The protein localises to the chloroplast stroma. It carries out the reaction Hydrolysis of (1-&gt;6)-alpha-D-glucosidic linkages in alpha- and beta-limit dextrins of amylopectin and glycogen, and in amylopectin and pullulan.. It participates in glycan biosynthesis; starch biosynthesis. Its pathway is glycan degradation; starch degradation. In terms of biological role, involved in starch degradation and also probably in the trimming of pre-amylopectin chains during starch synthesis. The sequence is that of Pullulanase 1, chloroplastic (PU1) from Arabidopsis thaliana (Mouse-ear cress).